Consider the following 325-residue polypeptide: NADH-ubiquinone oxidoreductase chain 1 (325 aa).

The next 8 membrane-spanning stretches (helical) occupy residues 5 to 25, 68 to 88, 105 to 125, 144 to 164, 177 to 197, 227 to 247, 263 to 283, and 302 to 322; these read VPAEILGIILPLLLGVAFLVL, SANFFLFRMAPVATFMLSLVA, IGLLYLFAISSLGVYGIIIAG, MVSYEVSIGLILITVLICVGS, IWFGIPLFPVLVMFFISCLAE, LFFLGEYANMILMSGLCTLFF, IPGSIWFSIKVLFFLFLYIWV, and VFLPLSLARVVPVSGLLVTFQ.

It belongs to the complex I subunit 1 family. As to quaternary structure, complex I is composed of at least 49 different subunits.

It is found in the mitochondrion inner membrane. It catalyses the reaction a ubiquinone + NADH + 5 H(+)(in) = a ubiquinol + NAD(+) + 4 H(+)(out). Its function is as follows. Core subunit of the mitochondrial membrane respiratory chain NADH dehydrogenase (Complex I) that is believed to belong to the minimal assembly required for catalysis. Complex I functions in the transfer of electrons from NADH to the respiratory chain. The immediate electron acceptor for the enzyme is believed to be ubiquinone. This is NADH-ubiquinone oxidoreductase chain 1 (ND1) from Arabidopsis thaliana (Mouse-ear cress).